Here is a 221-residue protein sequence, read N- to C-terminus: MALALAALAAVEPACGSGYQQLQNEEEPGEPEQTAGDAPPPYSSITAESAAYFDYKDESGFPKPPSYNVATTLPSYDEAERTKTEATIPLVPGRDEDFVGRDDFDDTDQLRIGNDGIFMLTFFMAFLFNWIGFFLSFCLTTSAAGRYGAISGFGLSLIKWILIVRFSTYFPGYFDGQYWLWWVFLVLGFLLFLRGFINYAKVRKMPETFSNLPRTRVLFIY.

Alanine 2 bears the N-acetylalanine mark. Residues 2-41 (ALALAALAAVEPACGSGYQQLQNEEEPGEPEQTAGDAPPP) are interaction with UBE2L3. Residues 2-116 (ALALAALAAV…TDQLRIGNDG (115 aa)) lie on the Cytoplasmic side of the membrane. Positions 18 to 44 (GYQQLQNEEEPGEPEQTAGDAPPPYSS) are disordered. 3 short sequence motifs (PPxY motif) span residues 39–42 (PPPY), 64–67 (PPSY), and 74–76 (PSY). The tract at residues 42-76 (YSSITAESAAYFDYKDESGFPKPPSYNVATTLPSY) is interaction with ITCH. A helical membrane pass occupies residues 117 to 137 (IFMLTFFMAFLFNWIGFFLSF). Topologically, residues 138-143 (CLTTSA) are extracellular. A helical membrane pass occupies residues 144–164 (AGRYGAISGFGLSLIKWILIV). At 165 to 172 (RFSTYFPG) the chain is on the cytoplasmic side. A helical transmembrane segment spans residues 173–193 (YFDGQYWLWWVFLVLGFLLFL). Residues 194 to 221 (RGFINYAKVRKMPETFSNLPRTRVLFIY) lie on the Extracellular side of the membrane.

In terms of assembly, forms heterodimers with NDFIP2. Interacts with several E3 ubiquitin-protein ligases, including ITCH, NEDD4, NEDD4L and WWP2. The interaction with NEDD4, NEDD4L and ITCH leads to relocalization of these proteins to exosomes and eventually to exosomal secretion. Interacts with U2SURP. Interacts with SLC11A2/DMT1. Interacts with PTEN. May interact with phosphorylated EGFR. Interacts with BRAT1. Interacts with KCNH2. Interacts with MAVS. Part of a complex containing ITCH, NDFIP1 and MAP3K7. Interacts (via N-terminus) with UBE2L3; the interaction mediates recruitment of UBE2L3 to ITCH. Ubiquitinated by NEDD4; mono-, di- and polyubiquitinated forms are detected. Ubiquitination regulates its degradation. In terms of processing, undergoes transient tyrosine phosphorylation following EGF stimulation, most probably by catalyzed by SRC. Phosphorylation SRC is enhanced in the presence of NDFIP2 which may act as a scaffold to recruit SRC to NDFIP1. In terms of tissue distribution, highly expressed in embryonic and early postnatal cortex (at protein level). Widely expressed. Hardly detectable in resting T-cells; up-regulated in T-cells in response to activation.

It localises to the endosome membrane. It is found in the golgi apparatus membrane. The protein localises to the synapse. Its subcellular location is the synaptosome. The protein resides in the cell projection. It localises to the dendrite. It is found in the secreted. Activates HECT domain-containing E3 ubiquitin-protein ligases, including NEDD4 and ITCH, and consequently modulates the stability of their targets. As a result, controls many cellular processes. Prevents chronic T-helper cell-mediated inflammation by activating ITCH and thus controlling JUNB degradation. Promotes pancreatic beta cell death through degradation of JUNB and inhibition of the unfolded protein response, leading to reduction of insulin secretion. Restricts the production of pro-inflammatory cytokines in effector Th17 T-cells by promoting ITCH-mediated ubiquitination and degradation of RORC. Together with NDFIP2, limits the cytokine signaling and expansion of effector Th2 T-cells by promoting degradation of JAK1, probably by ITCH- and NEDD4L-mediated ubiquitination. Regulates peripheral T-cell tolerance to self and foreign antigens, forcing the exit of naive CD4+ T-cells from the cell cycle before they become effector T-cells. Negatively regulates RLR-mediated antiviral response by promoting SMURF1-mediated ubiquitination and subsequent degradation of MAVS. Negatively regulates KCNH2 potassium channel activity by decreasing its cell-surface expression and interfering with channel maturation through recruitment of NEDD4L to the Golgi apparatus where it mediates KCNH2 degradation. In cortical neurons, mediates the ubiquitination of the divalent metal transporter SLC11A2/DMT1 by NEDD4L, leading to its down-regulation and protection of the cells from cobalt and iron toxicity. Important for normal development of dendrites and dendritic spines in cortex. Enhances the ubiquitination of BRAT1 mediated by: NEDD4, NEDD4L and ITCH and is required for the nuclear localization of ubiquitinated BRAT1. Enhances the ITCH-mediated ubiquitination of MAP3K7 by recruiting E2 ubiquitin-conjugating enzyme UBE2L3 to ITCH. Modulates EGFR signaling through multiple pathways. In particular, may regulate the ratio of AKT1-to-MAPK8 signaling in response to EGF, acting on AKT1 probably through PTEN destabilization and on MAPK8 through ITCH-dependent MAP2K4 inactivation. As a result, may control cell growth rate. Inhibits cell proliferation by promoting PTEN nuclear localization and changing its signaling specificity. The polypeptide is NEDD4 family-interacting protein 1 (Ndfip1) (Mus musculus (Mouse)).